A 20-amino-acid polypeptide reads, in one-letter code: Agglutinin beta-3 chain (20 aa).

It belongs to the jacalin lectin family. Tetramer of four alpha chains associated with two or four beta chains.

D-galactose-specific lectin, binds the T-antigen structure Gal-beta1,3-GalNAc (Thomsen-Friedenreich-antigen-specific lectin). Potent and selective stimulant of distinct T- and B-cell functions. Shows a unique ability to specifically recognize IgA-1 from human serum. This Artocarpus integer (Jack fruit) protein is Agglutinin beta-3 chain.